The following is a 470-amino-acid chain: Putative ankyrin repeat protein L279 (470 aa).

ANK repeat units follow at residues 119 to 148, 149 to 178, 372 to 401, and 403 to 431; these read RDDY…NPGT, NKYA…GSDK, ETQG…NVNE, and NGKP…DISL.

The polypeptide is Putative ankyrin repeat protein L279 (Acanthamoeba polyphaga (Amoeba)).